Consider the following 465-residue polypeptide: Dihydrolipoyllysine-residue acetyltransferase component 5 of pyruvate dehydrogenase complex, chloroplastic (465 aa).

A chloroplast-targeting transit peptide spans 1–31; the sequence is MSRLLQTPFLPSVSLPTKTRSSVTGFRVKPR. One can recognise a Lipoyl-binding domain in the interval 39 to 114; it reads IREIFMPALS…PVGSAIALLA (76 aa). K80 is subject to N6-lipoyllysine. The interval 123-148 is disordered; that stretch reads AKAKASGGGGGGDSKAPPASPPTAAV. Residues 136–148 show a composition bias toward low complexity; it reads SKAPPASPPTAAV. Positions 184–221 constitute a Peripheral subunit-binding (PSBD) domain; it reads VASPYAKKLAKELKVELAGLVGSGPMGRIVAKDVEAVA. H438 is a catalytic residue.

The protein belongs to the 2-oxoacid dehydrogenase family. It depends on (R)-lipoate as a cofactor.

The protein localises to the plastid. It is found in the chloroplast stroma. The catalysed reaction is N(6)-[(R)-dihydrolipoyl]-L-lysyl-[protein] + acetyl-CoA = N(6)-[(R)-S(8)-acetyldihydrolipoyl]-L-lysyl-[protein] + CoA. The pyruvate dehydrogenase complex catalyzes the overall conversion of pyruvate to acetyl-CoA and CO(2). It contains multiple copies of three enzymatic components: pyruvate dehydrogenase (E1), dihydrolipoamide acetyltransferase (E2) and lipoamide dehydrogenase (E3). The sequence is that of Dihydrolipoyllysine-residue acetyltransferase component 5 of pyruvate dehydrogenase complex, chloroplastic (EMB3003) from Arabidopsis thaliana (Mouse-ear cress).